Here is a 477-residue protein sequence, read N- to C-terminus: Proton extrusion protein PxcA (477 aa).

Transmembrane regions (helical) follow at residues phenylalanine 239–valine 259, glycine 354–threonine 374, and phenylalanine 437–isoleucine 457.

The protein belongs to the CemA family.

It is found in the cell inner membrane. Its function is as follows. Required for H(+) efflux immediately after light irradiation to form a rapid H(+) concentration gradient across the thylakoid membranes. Together with PxcL, contributes to transient H(+) uptake following dark to light transition. This Trichodesmium erythraeum (strain IMS101) protein is Proton extrusion protein PxcA.